Reading from the N-terminus, the 361-residue chain is Queuine tRNA-ribosyltransferase (361 aa).

The active-site Proton acceptor is the aspartate 92. Substrate-binding positions include 92–96, aspartate 146, glutamine 189, and glycine 216; that span reads DSGGF. An RNA binding region spans residues 247–253; that stretch reads GVGKPAD. Catalysis depends on aspartate 266, which acts as the Nucleophile. The tract at residues 271–275 is RNA binding; important for wobble base 34 recognition; sequence TRSGR. Residues cysteine 304, cysteine 306, cysteine 309, and histidine 335 each contribute to the Zn(2+) site.

It belongs to the queuine tRNA-ribosyltransferase family. Homodimer. Within each dimer, one monomer is responsible for RNA recognition and catalysis, while the other monomer binds to the replacement base PreQ1. Requires Zn(2+) as cofactor.

It carries out the reaction 7-aminomethyl-7-carbaguanine + guanosine(34) in tRNA = 7-aminomethyl-7-carbaguanosine(34) in tRNA + guanine. It participates in tRNA modification; tRNA-queuosine biosynthesis. Its function is as follows. Catalyzes the base-exchange of a guanine (G) residue with the queuine precursor 7-aminomethyl-7-deazaguanine (PreQ1) at position 34 (anticodon wobble position) in tRNAs with GU(N) anticodons (tRNA-Asp, -Asn, -His and -Tyr). Catalysis occurs through a double-displacement mechanism. The nucleophile active site attacks the C1' of nucleotide 34 to detach the guanine base from the RNA, forming a covalent enzyme-RNA intermediate. The proton acceptor active site deprotonates the incoming PreQ1, allowing a nucleophilic attack on the C1' of the ribose to form the product. After dissociation, two additional enzymatic reactions on the tRNA convert PreQ1 to queuine (Q), resulting in the hypermodified nucleoside queuosine (7-(((4,5-cis-dihydroxy-2-cyclopenten-1-yl)amino)methyl)-7-deazaguanosine). The chain is Queuine tRNA-ribosyltransferase from Rickettsia akari (strain Hartford).